We begin with the raw amino-acid sequence, 428 residues long: Kynureninase (428 aa).

Pyridoxal 5'-phosphate contacts are provided by residues Thr-104, Thr-105, 132-135, Asp-213, His-216, and Tyr-238; that span reads FPSD. Residue Lys-239 is modified to N6-(pyridoxal phosphate)lysine. Trp-267 and Thr-295 together coordinate pyridoxal 5'-phosphate.

Belongs to the kynureninase family. In terms of assembly, homodimer. It depends on pyridoxal 5'-phosphate as a cofactor.

The enzyme catalyses L-kynurenine + H2O = anthranilate + L-alanine + H(+). It catalyses the reaction 3-hydroxy-L-kynurenine + H2O = 3-hydroxyanthranilate + L-alanine + H(+). The protein operates within amino-acid degradation; L-kynurenine degradation; L-alanine and anthranilate from L-kynurenine: step 1/1. Its pathway is cofactor biosynthesis; NAD(+) biosynthesis; quinolinate from L-kynurenine: step 2/3. Its function is as follows. Catalyzes the cleavage of L-kynurenine (L-Kyn) and L-3-hydroxykynurenine (L-3OHKyn) into anthranilic acid (AA) and 3-hydroxyanthranilic acid (3-OHAA), respectively. This chain is Kynureninase, found in Bacillus cereus (strain ATCC 14579 / DSM 31 / CCUG 7414 / JCM 2152 / NBRC 15305 / NCIMB 9373 / NCTC 2599 / NRRL B-3711).